Consider the following 269-residue polypeptide: Diphthine synthase (269 aa).

S-adenosyl-L-methionine-binding positions include Leu10, Asp87, Val90, 115 to 116 (SI), Leu166, Ala209, and His234.

This sequence belongs to the diphthine synthase family. Homodimer.

It catalyses the reaction 2-[(3S)-amino-3-carboxypropyl]-L-histidyl-[translation elongation factor 2] + 3 S-adenosyl-L-methionine = diphthine-[translation elongation factor 2] + 3 S-adenosyl-L-homocysteine + 3 H(+). Its pathway is protein modification; peptidyl-diphthamide biosynthesis. Functionally, S-adenosyl-L-methionine-dependent methyltransferase that catalyzes the trimethylation of the amino group of the modified target histidine residue in translation elongation factor 2 (EF-2), to form an intermediate called diphthine. The three successive methylation reactions represent the second step of diphthamide biosynthesis. This is Diphthine synthase from Pyrococcus furiosus (strain ATCC 43587 / DSM 3638 / JCM 8422 / Vc1).